Reading from the N-terminus, the 918-residue chain is Protein SEY1 homolog (918 aa).

The Cytoplasmic segment spans residues 1–701; that stretch reads MESSNHLPNK…AGTSVSSWRN (701 aa). The GB1/RHD3-type G domain maps to 46–280; sequence GFKFNVVTIL…VPSDGFFVYS (235 aa). 56-63 is a GTP binding site; it reads GSQSSGKS. Residues 554–626 are a coiled coil; that stretch reads SLVLLLKATQ…DALTLLQVLK (73 aa). A helical membrane pass occupies residues 702–722; it reads IPPVFWLVLLVLGWNELRAAF. The Lumenal segment spans residues 723-725; it reads RVL. A helical membrane pass occupies residues 726–746; the sequence is LKFYILIPLLIVSYFTFSYSA. At 747–918 the chain is on the cytoplasmic side; that stretch reads NKLLGPKANE…CGKAVHLAQW (172 aa).

The protein belongs to the TRAFAC class dynamin-like GTPase superfamily. GB1/RHD3 GTPase family. RHD3 subfamily.

The protein localises to the endoplasmic reticulum membrane. In terms of biological role, probable GTP-binding protein that may be involved in cell development. This is Protein SEY1 homolog from Theileria annulata.